Reading from the N-terminus, the 304-residue chain is bZIP transcription factor 50 (304 aa).

Residues 1-222 (MDVEFFADLD…MQESAVLTET (222 aa)) are Cytoplasmic-facing. Disordered regions lie at residues 26 to 60 (GSGV…SREA) and 94 to 163 (GEEE…ERKK). Over residues 45–59 (SPESVSSRRPSPSRE) the composition is skewed to low complexity. Over residues 127 to 139 (EKEDVEAEVDGDD) the composition is skewed to acidic residues. Residues 141–203 (MSKKKRRQMR…NMALRQSLLK (63 aa)) form the bZIP domain. The basic motif stretch occupies residues 143 to 167 (KKKRRQMRNRDSAMKSRERKKMYVK). Basic and acidic residues predominate over residues 150-163 (RNRDSAMKSRERKK). The leucine-zipper stretch occupies residues 169–183 (LETKSKYLEAECRRL). The chain crosses the membrane as a helical span at residues 223–243 (LPLVSLLWLVSIVCLLPVPGL). Residues 244 to 304 (PNRNPVARSS…GPFRLAAAAC (61 aa)) lie on the Lumenal side of the membrane.

It belongs to the bZIP family.

It localises to the endoplasmic reticulum membrane. The protein resides in the nucleus. With respect to regulation, transcriptionally activated by IRE1 in response to endoplasmic reticulum (ER) stress. IRE1 cleaves a 20-bp fragment causing a frameshift of the mRNA transcript, leading to a nuclear isoform of the BZIP50 activator. In terms of biological role, transcription factor involved in endoplasmic reticulum (ER) stress response. Acts downstream of the ER stress sensors IRE1, BZIP39 and BZIP60 to activate BiP chaperone genes. The chain is bZIP transcription factor 50 from Oryza sativa subsp. japonica (Rice).